The primary structure comprises 411 residues: LL-diaminopimelate aminotransferase (411 aa).

Positions 15 and 42 each coordinate substrate. Residues Tyr72, 108–109 (SK), Tyr132, Asn187, Tyr218, and 246–248 (SFS) contribute to the pyridoxal 5'-phosphate site. Residues Lys109, Tyr132, and Asn187 each coordinate substrate. Lys249 bears the N6-(pyridoxal phosphate)lysine mark. The pyridoxal 5'-phosphate site is built by Arg257 and Asn292. 2 residues coordinate substrate: Asn292 and Arg388.

This sequence belongs to the class-I pyridoxal-phosphate-dependent aminotransferase family. LL-diaminopimelate aminotransferase subfamily. In terms of assembly, homodimer. Pyridoxal 5'-phosphate serves as cofactor.

The enzyme catalyses (2S,6S)-2,6-diaminopimelate + 2-oxoglutarate = (S)-2,3,4,5-tetrahydrodipicolinate + L-glutamate + H2O + H(+). Its pathway is amino-acid biosynthesis; L-lysine biosynthesis via DAP pathway; LL-2,6-diaminopimelate from (S)-tetrahydrodipicolinate (aminotransferase route): step 1/1. Involved in the synthesis of meso-diaminopimelate (m-DAP or DL-DAP), required for both lysine and peptidoglycan biosynthesis. Catalyzes the direct conversion of tetrahydrodipicolinate to LL-diaminopimelate. This Synechococcus elongatus (strain ATCC 33912 / PCC 7942 / FACHB-805) (Anacystis nidulans R2) protein is LL-diaminopimelate aminotransferase.